The following is a 189-amino-acid chain: Der GTPase-activating protein YihI (189 aa).

Residues 1–81 (MARKKKTRRV…ALAKKDPRLG (81 aa)) are disordered. 2 stretches are compositionally biased toward basic and acidic residues: residues 9–27 (RVSD…ELPK) and 35–46 (TRYELDAKARED). The segment covering 60-71 (RHSATENNNNHQ) has biased composition (polar residues).

Belongs to the YihI family. In terms of assembly, interacts with Der.

In terms of biological role, a GTPase-activating protein (GAP) that modifies Der/EngA GTPase function. May play a role in ribosome biogenesis. This is Der GTPase-activating protein YihI from Pasteurella multocida (strain Pm70).